A 663-amino-acid polypeptide reads, in one-letter code: Probable receptor-like protein kinase At1g49730 (663 aa).

The first 25 residues, 1-25, serve as a signal peptide directing secretion; it reads MVVNSQAFLLALIALLATQLPSLMA. Residues 26 to 254 lie on the Extracellular side of the membrane; sequence ADCPLDFSGS…TNPYHLTMVP (229 aa). N36, N46, N70, N101, and N171 each carry an N-linked (GlcNAc...) asparagine glycan. The interval 213–243 is disordered; it reads SFSPVASPEPSPSTVGGISPSNSDSQMTTSR. Positions 224 to 243 are enriched in polar residues; that stretch reads PSTVGGISPSNSDSQMTTSR. Residues 255-275 form a helical membrane-spanning segment; the sequence is TIGIVVTAVALTMLVVLVILI. Residues 276-663 lie on the Cytoplasmic side of the membrane; that stretch reads RRKNRELDES…PHSPINGFSF (388 aa). The region spanning 327–609 is the Protein kinase domain; that stretch reads NDFNTVIGQG…ESCDPVHSAF (283 aa). ATP is bound by residues 333–341 and K355; that span reads IGQGGFGTV. D451 functions as the Proton acceptor in the catalytic mechanism. The disordered stretch occupies residues 631-663; it reads RGDSRIFGPSSSTTSRSHYSRSLPHSPINGFSF. Positions 640–652 are enriched in low complexity; sequence SSSTTSRSHYSRS.

This sequence belongs to the protein kinase superfamily. Ser/Thr protein kinase family.

It localises to the cell membrane. It catalyses the reaction L-seryl-[protein] + ATP = O-phospho-L-seryl-[protein] + ADP + H(+). It carries out the reaction L-threonyl-[protein] + ATP = O-phospho-L-threonyl-[protein] + ADP + H(+). The sequence is that of Probable receptor-like protein kinase At1g49730 from Arabidopsis thaliana (Mouse-ear cress).